The chain runs to 177 residues: ATP synthase subunit delta (177 aa).

The protein belongs to the ATPase delta chain family. As to quaternary structure, F-type ATPases have 2 components, F(1) - the catalytic core - and F(0) - the membrane proton channel. F(1) has five subunits: alpha(3), beta(3), gamma(1), delta(1), epsilon(1). F(0) has three main subunits: a(1), b(2) and c(10-14). The alpha and beta chains form an alternating ring which encloses part of the gamma chain. F(1) is attached to F(0) by a central stalk formed by the gamma and epsilon chains, while a peripheral stalk is formed by the delta and b chains.

Its subcellular location is the cell inner membrane. Its function is as follows. F(1)F(0) ATP synthase produces ATP from ADP in the presence of a proton or sodium gradient. F-type ATPases consist of two structural domains, F(1) containing the extramembraneous catalytic core and F(0) containing the membrane proton channel, linked together by a central stalk and a peripheral stalk. During catalysis, ATP synthesis in the catalytic domain of F(1) is coupled via a rotary mechanism of the central stalk subunits to proton translocation. Functionally, this protein is part of the stalk that links CF(0) to CF(1). It either transmits conformational changes from CF(0) to CF(1) or is implicated in proton conduction. In Neisseria gonorrhoeae (strain ATCC 700825 / FA 1090), this protein is ATP synthase subunit delta.